A 458-amino-acid polypeptide reads, in one-letter code: Transcription termination factor Rho (458 aa).

The segment at 1-23 (MNTTNKESTAELNNTESNNNYNN) is disordered. The segment covering 10 to 23 (AELNNTESNNNYNN) has biased composition (low complexity). Residues 78–153 (LIVGEGVLEV…LKVNRVNFED (76 aa)) enclose the Rho RNA-BD domain. ATP contacts are provided by residues 201–206 (GKGQRA), 213–218 (RTGKTV), and R244.

The protein belongs to the Rho family. In terms of assembly, homohexamer. The homohexamer assembles into an open ring structure.

Functionally, facilitates transcription termination by a mechanism that involves Rho binding to the nascent RNA, activation of Rho's RNA-dependent ATPase activity, and release of the mRNA from the DNA template. In Rickettsia conorii (strain ATCC VR-613 / Malish 7), this protein is Transcription termination factor Rho.